Consider the following 176-residue polypeptide: Nucleoside triphosphate/diphosphate phosphatase (176 aa).

Arginine 23 (proton donor) is an active-site residue. Mg(2+) is bound by residues asparagine 87, aspartate 103, aspartate 105, aspartate 107, aspartate 120, and glutamate 123.

Belongs to the Ntdp family. Mg(2+) serves as cofactor.

It catalyses the reaction a ribonucleoside 5'-triphosphate + H2O = a ribonucleoside 5'-diphosphate + phosphate + H(+). It carries out the reaction a ribonucleoside 5'-diphosphate + H2O = a ribonucleoside 5'-phosphate + phosphate + H(+). Has nucleoside phosphatase activity towards nucleoside triphosphates and nucleoside diphosphates. The polypeptide is Nucleoside triphosphate/diphosphate phosphatase (Bacillus cereus (strain G9842)).